A 254-amino-acid polypeptide reads, in one-letter code: Low affinity immunoglobulin gamma Fc region receptor III-A (254 aa).

Positions 1 to 20 (MWHLLPPSALLLLISSVTKA) are cleaved as a signal peptide. Residues 21-209 (ADPSKAVVLL…IAPLFPLWQQ (189 aa)) are Extracellular-facing. Ig-like C2-type domains lie at 23 to 104 (PSKA…VQLQ) and 121 to 174 (KGES…YYCR). N-linked (GlcNAc...) asparagine glycosylation is found at asparagine 42, asparagine 63, asparagine 166, and asparagine 181. Intrachain disulfides connect cysteine 47/cysteine 90 and cysteine 129/cysteine 173. The helical transmembrane segment at 210-230 (IAFCLMMGLLFAVDTGLYFFV) threads the bilayer. The Cytoplasmic portion of the chain corresponds to 231–254 (RRDLRRSMVHKEEYNFKWSQAQDK).

In terms of assembly, forms a heterooligomeric complex with ITAM-containing signaling subunits FCER1G. Interacts (via transmembrane domain) with signaling subunits; this interaction is a prerequisite for receptor complex expression on the cell surface and intracellular signal transduction. Binds the Fc region of antigen-complexed IgG. N-glycosylated. Post-translationally, phosphorylated following receptor ligation.

It is found in the cell membrane. Receptor for the invariable Fc fragment of immunoglobulin gamma (IgG). Binds with intermediate affinity to both IgG2a and IgG2b. Can bind to IgG2a and IgG2b monomers. Does not display binding to IgG1 or IgG3. Recognizes neutralizing virus-specific IgGs displayed on the cell surface of infected cells and triggers antibody-dependent cellular cytotoxicity (ADCC). Confers protection to lethal influenza virus infection. On splenic dendritic cells, uptakes antigen immune complexes and efficiently divert them into MHC class I and II antigen presentation pathways to provide for superior priming of CD4-positive and CD8-positive T cell immune responses. Mediates neutrophil activation by IgG complexes redundantly with FCGR2A. Plays a role in promoting bone resorption by enhancing osteoclast differentiation following binding to IgG2a. Also acts as a receptor for the Fc region of immunoglobulin epsilon (IgE). Binds with low affinity to both the a and b allotypes of IgE. Has also been shown to bind to IgE allotype a only but not to allotype b. Binds aggregated IgE but not the monomeric form and bound monomeric IgG is readily displaced by IgE complexes. Binding to IgE promotes macrophage-mediated phagocytosis, antigen presentation to T cells, production of pro-inflammatory cytokines and the late phase of cutaneous allergic reactions. Mediates enhanced ADCC in response to afucosylated IgGs. This chain is Low affinity immunoglobulin gamma Fc region receptor III-A, found in Cavia porcellus (Guinea pig).